The following is a 182-amino-acid chain: Ribosome maturation factor RimM (182 aa).

The PRC barrel domain occupies Val-103 to Phe-182.

This sequence belongs to the RimM family. Binds ribosomal protein uS19.

It localises to the cytoplasm. Its function is as follows. An accessory protein needed during the final step in the assembly of 30S ribosomal subunit, possibly for assembly of the head region. Essential for efficient processing of 16S rRNA. May be needed both before and after RbfA during the maturation of 16S rRNA. It has affinity for free ribosomal 30S subunits but not for 70S ribosomes. The sequence is that of Ribosome maturation factor RimM from Pectobacterium atrosepticum (strain SCRI 1043 / ATCC BAA-672) (Erwinia carotovora subsp. atroseptica).